We begin with the raw amino-acid sequence, 853 residues long: DNA mismatch repair protein MutS (853 aa).

614–621 (GPNMGGKS) provides a ligand contact to ATP.

This sequence belongs to the DNA mismatch repair MutS family.

Its function is as follows. This protein is involved in the repair of mismatches in DNA. It is possible that it carries out the mismatch recognition step. This protein has a weak ATPase activity. This Escherichia coli O81 (strain ED1a) protein is DNA mismatch repair protein MutS.